The chain runs to 219 residues: Claudin-20 (219 aa).

Residues methionine 1–glutamine 7 are Cytoplasmic-facing. Residues leucine 8–proline 28 form a helical membrane-spanning segment. The Extracellular segment spans residues asparagine 29 to arginine 81. A helical membrane pass occupies residues alanine 82–methionine 102. Residues lysine 103–serine 118 lie on the Cytoplasmic side of the membrane. The chain crosses the membrane as a helical span at residues phenylalanine 119–tyrosine 139. Residues threonine 140–proline 160 are Extracellular-facing. A helical transmembrane segment spans residues glycine 161–phenylalanine 181. Over cysteine 182 to valine 219 the chain is Cytoplasmic. The segment at arginine 193 to valine 219 is disordered. Over residues glutamine 200 to histidine 213 the composition is skewed to polar residues.

It belongs to the claudin family.

It localises to the cell junction. The protein localises to the tight junction. It is found in the cell membrane. Functionally, plays a major role in tight junction-specific obliteration of the intercellular space, through calcium-independent cell-adhesion activity. The polypeptide is Claudin-20 (CLDN20) (Homo sapiens (Human)).